The following is a 488-amino-acid chain: GTPase Der (488 aa).

EngA-type G domains lie at 3–166 (PVVA…AEAM) and 199–372 (IKLA…DSAT). GTP contacts are provided by residues 9–16 (GRPNVGKS), 56–60 (DTGGI), 118–121 (NKVD), 205–212 (GKPNVGKS), 252–256 (DTAGV), and 317–320 (NKWD). Residues 373–457 (RRVSTSMLTR…PIQLRFQEGD (85 aa)) form the KH-like domain. Residues 469-488 (MSQERRRKRALSHIKDRKTK) are disordered. A compositionally biased stretch (basic residues) spans 473 to 488 (RRRKRALSHIKDRKTK).

It belongs to the TRAFAC class TrmE-Era-EngA-EngB-Septin-like GTPase superfamily. EngA (Der) GTPase family. As to quaternary structure, associates with the 50S ribosomal subunit.

Its function is as follows. GTPase that plays an essential role in the late steps of ribosome biogenesis. The polypeptide is GTPase Der (Shewanella putrefaciens (strain CN-32 / ATCC BAA-453)).